The following is a 916-amino-acid chain: DNA topoisomerase 1 alpha (916 aa).

Positions 1–369 (MGTETVSKPV…SSPSSGDGQK (369 aa)) are disordered. Residues 34 to 47 (SNSNQSKSNSQRSK) are compositionally biased toward low complexity. The span at 60–76 (PVTSPNGTTPSNKTSIV) shows a compositional bias: polar residues. Positions 77 to 93 (KSSMPSSSSKASPAKSP) are enriched in low complexity. The segment covering 102–119 (VKDRSQLQKDQSECKIEH) has biased composition (basic and acidic residues). Positions 130–148 (SILSGNKGPTSSRQVSSPQ) are enriched in polar residues. A compositionally biased stretch (basic and acidic residues) spans 149–168 (PEKKNNGDRPLDRASRIIKD). At Ser-170 the chain carries Phosphoserine. The segment covering 230–239 (KNSSADQSSL) has biased composition (polar residues). Basic and acidic residues predominate over residues 253–267 (MKQDSVKKEIDDKGR). Residues 285-294 (GTDDDDDDDV) show a composition bias toward acidic residues. Thr-286 is subject to Phosphothreonine. A compositionally biased stretch (low complexity) spans 354 to 366 (YSTSSKSSPSSGD). Interaction with DNA stretches follow at residues 577 to 578 (KY), 640 to 645 (RAGNEK), and 731 to 733 (TAK). One can recognise a Topo IB-type catalytic domain in the interval 584–914 (GSSLKGLSDK…MDVEPEYRFS (331 aa)). Residues 778–860 (QRTVSKTHGA…ERDMHTKEDL (83 aa)) adopt a coiled-coil conformation. Residue Tyr-872 is the O-(3'-phospho-DNA)-tyrosine intermediate of the active site.

This sequence belongs to the type IB topoisomerase family. In terms of assembly, interacts with DEK3. In terms of tissue distribution, expressed in inflorescence meristems. Expressed in primordia of sepals, petals, stamens, carpels and ovules. Expressed in midstage embryos.

It is found in the nucleus. It carries out the reaction ATP-independent breakage of single-stranded DNA, followed by passage and rejoining.. In terms of biological role, releases the supercoiling and torsional tension of DNA introduced during the DNA replication and transcription by transiently cleaving and rejoining one strand of the DNA duplex. Introduces a single-strand break via transesterification at a target site in duplex DNA. The scissile phosphodiester is attacked by the catalytic tyrosine of the enzyme, resulting in the formation of a DNA-(3'-phosphotyrosyl)-enzyme intermediate and the expulsion of a 5'-OH DNA strand. The free DNA strand then rotates around the intact phosphodiester bond on the opposing strand, thus removing DNA supercoils. Finally, in the religation step, the DNA 5'-OH attacks the covalent intermediate to expel the active-site tyrosine and restore the DNA phosphodiester backbone. Can complement a TOP1-deficient yeast mutant. Plays a critical role in the maintenance of a regular pattern of organ initiation. Topoisomerases I enzymes (TOP1A and TOP1B) are essential for plant survival. Functions together with the stem cell maintenance gene WUSCHEL (WUS) in stem cell regulation. Required to maintain developmentally regulated gene repression. Functions synergistically with chromatin remodeling factors. Is required for the repression of WUS expression in flower development. Plays a role in polycomb group (PcG) protein-mediated histone H3 trimethylation on 'Lys-27' (H3K27me3) at the WUS gene locus. H3K27me3 induces transcriptional repression of WUS. May assist AGAMOUS (AG) in recruiting PcG proteins to WUS locus. Reduces nucleosome density, especially at genes that are targets of PcG proteins. Plays a role in epigenetic silencing. Involved in RNA-directed DNA methylation (RdDM) by promoting Pol V transcription to generate long non-coding RNA transcripts. Is dispensable for Pol IV-mediated small interfering RNA (siRNA) biogenesis. Promotes transposable element (TE) silencing at endogenous RdDM target loci through histone H3 dimethylation of 'Lys-9' (H3K9me2). Promotes the production of Pol V-dependent long non-coding transcripts that facilitate the recruitment of siRNA-AGO4 and AGO4 occupancy at TEs. This Arabidopsis thaliana (Mouse-ear cress) protein is DNA topoisomerase 1 alpha.